We begin with the raw amino-acid sequence, 198 residues long: uncharacterized protein (198 aa).

The region spanning 1-110 is the PA14 domain; sequence MTGYFLPPQT…GTTVSDDFEG (110 aa).

The protein belongs to the flocculin family.

This is an uncharacterized protein from Saccharomyces cerevisiae (strain ATCC 204508 / S288c) (Baker's yeast).